The primary structure comprises 345 residues: MNTTTRTFYLPRLEDTFSVFPDNGLNPHYAECRIQSQAWIDKYYKIVCGPKMRAYMDHCKFELITAYTYPYASSDGLRKTMDLANILWLYDEFTDTLSGKDATNAAAIVIRTLRERDFDDGSWICHMMRDFYAAHIEKFGPNVSRRFIDHFCQYVEGTGTEAKHREKDHVLDINAYIIMRRAASAVLTAFDLAEYCLGIDLPQYVHDDPAFISGYNAGLDLVFLDNDLFSYDMEQAKGHCTTNIITVVMKSKRIDLQSAFDFTAGYCESLTQQLIAAQISLASRTDPVFSNNAVKCLEAIANWVKGSDGWSFATERYFGKQNVIVKETRAVEMRKSFQDIAVLKE.

Positions 91, 226, 230, and 234 each coordinate Mg(2+). The short motif at 91–95 (DEFTD) is the DDXXD motif element. (2E,6E)-farnesyl diphosphate contacts are provided by R316 and Y317.

Belongs to the terpene synthase family. Mg(2+) serves as cofactor.

It catalyses the reaction (2E,6E)-farnesyl diphosphate = beta-gurjunene + diphosphate. In terms of biological role, terpene cyclase that catalyzes the cyclization of farnesyl diphosphate (FPP) to beta-gurjunene. This chain is Sesquiterpene synthase GALMADRAFT_104215, found in Galerina marginata (strain CBS 339.88).